Consider the following 254-residue polypeptide: Decaprenylphosphoryl-2-keto-beta-D-erythro-pentose reductase (254 aa).

An NAD(+)-binding site is contributed by Asp-67. Catalysis depends on Tyr-160, which acts as the Proton acceptor. Lys-164 lines the NAD(+) pocket.

This sequence belongs to the short-chain dehydrogenases/reductases (SDR) family. Interacts with DprE1 to form an epimerase complex.

Its subcellular location is the periplasm. It catalyses the reaction trans,octa-cis-decaprenylphospho-beta-D-arabinofuranose + NAD(+) = trans,octa-cis-decaprenylphospho-beta-D-erythro-pentofuranosid-2-ulose + NADH + H(+). Its pathway is cell wall biogenesis; cell wall polysaccharide biosynthesis. Functionally, component of the DprE1-DprE2 complex that catalyzes the 2-step epimerization of decaprenyl-phospho-ribose (DPR) to decaprenyl-phospho-arabinose (DPA), a key precursor that serves as the arabinose donor required for the synthesis of cell-wall arabinans. DprE1 catalyzes the first step of epimerization, namely FAD-dependent oxidation of the C2' hydroxyl of DPR to yield the keto intermediate decaprenyl-phospho-2'-keto-D-arabinose (DPX). The intermediate DPX is then transferred to DprE2 subunit of the epimerase complex, most probably through a 'substrate channel' at the interface of DprE1-DprE2 complex. DprE2 then catalyzes the second step of epimerization, the NAD(+)-dependent reduction of DPX that leads to the formation of DPA. The chain is Decaprenylphosphoryl-2-keto-beta-D-erythro-pentose reductase from Mycolicibacterium smegmatis (strain ATCC 700084 / mc(2)155) (Mycobacterium smegmatis).